Here is a 443-residue protein sequence, read N- to C-terminus: Probable glycine dehydrogenase (decarboxylating) subunit 1 (443 aa).

Belongs to the GcvP family. N-terminal subunit subfamily. The glycine cleavage system is composed of four proteins: P, T, L and H. In this organism, the P 'protein' is a heterodimer of two subunits.

It carries out the reaction N(6)-[(R)-lipoyl]-L-lysyl-[glycine-cleavage complex H protein] + glycine + H(+) = N(6)-[(R)-S(8)-aminomethyldihydrolipoyl]-L-lysyl-[glycine-cleavage complex H protein] + CO2. The glycine cleavage system catalyzes the degradation of glycine. The P protein binds the alpha-amino group of glycine through its pyridoxal phosphate cofactor; CO(2) is released and the remaining methylamine moiety is then transferred to the lipoamide cofactor of the H protein. This is Probable glycine dehydrogenase (decarboxylating) subunit 1 from Nitratidesulfovibrio vulgaris (strain ATCC 29579 / DSM 644 / CCUG 34227 / NCIMB 8303 / VKM B-1760 / Hildenborough) (Desulfovibrio vulgaris).